A 266-amino-acid chain; its full sequence is Tryptophan synthase alpha chain (266 aa).

Residues glutamate 49 and aspartate 60 each act as proton acceptor in the active site.

Belongs to the TrpA family. As to quaternary structure, tetramer of two alpha and two beta chains.

The catalysed reaction is (1S,2R)-1-C-(indol-3-yl)glycerol 3-phosphate + L-serine = D-glyceraldehyde 3-phosphate + L-tryptophan + H2O. The protein operates within amino-acid biosynthesis; L-tryptophan biosynthesis; L-tryptophan from chorismate: step 5/5. In terms of biological role, the alpha subunit is responsible for the aldol cleavage of indoleglycerol phosphate to indole and glyceraldehyde 3-phosphate. The protein is Tryptophan synthase alpha chain of Opitutus terrae (strain DSM 11246 / JCM 15787 / PB90-1).